We begin with the raw amino-acid sequence, 382 residues long: Mannitol-1-phosphate 5-dehydrogenase (382 aa).

NAD(+) is bound at residue 4-15 (AVHFGAGNIGRG).

This sequence belongs to the mannitol dehydrogenase family. In terms of assembly, monomer.

It catalyses the reaction D-mannitol 1-phosphate + NAD(+) = beta-D-fructose 6-phosphate + NADH + H(+). The protein is Mannitol-1-phosphate 5-dehydrogenase (mtlD) of Streptococcus mutans serotype c (strain ATCC 700610 / UA159).